The following is a 163-amino-acid chain: UPF0262 protein RPB_4349 (163 aa).

It belongs to the UPF0262 family.

This chain is UPF0262 protein RPB_4349, found in Rhodopseudomonas palustris (strain HaA2).